A 261-amino-acid polypeptide reads, in one-letter code: NAD(P)H-quinone oxidoreductase subunit K, chloroplastic (261 aa).

C43, C44, C108, and C139 together coordinate [4Fe-4S] cluster.

Belongs to the complex I 20 kDa subunit family. In terms of assembly, NDH is composed of at least 16 different subunits, 5 of which are encoded in the nucleus. It depends on [4Fe-4S] cluster as a cofactor.

It is found in the plastid. It localises to the chloroplast thylakoid membrane. The catalysed reaction is a plastoquinone + NADH + (n+1) H(+)(in) = a plastoquinol + NAD(+) + n H(+)(out). The enzyme catalyses a plastoquinone + NADPH + (n+1) H(+)(in) = a plastoquinol + NADP(+) + n H(+)(out). In terms of biological role, NDH shuttles electrons from NAD(P)H:plastoquinone, via FMN and iron-sulfur (Fe-S) centers, to quinones in the photosynthetic chain and possibly in a chloroplast respiratory chain. The immediate electron acceptor for the enzyme in this species is believed to be plastoquinone. Couples the redox reaction to proton translocation, and thus conserves the redox energy in a proton gradient. This Cycas taitungensis (Prince sago) protein is NAD(P)H-quinone oxidoreductase subunit K, chloroplastic.